The sequence spans 321 residues: L-carnitine dehydrogenase (321 aa).

Residue 7-12 (GTGVIG) participates in NAD(+) binding.

The protein belongs to the 3-hydroxyacyl-CoA dehydrogenase family. L-carnitine dehydrogenase subfamily. Homodimer.

The protein localises to the cytoplasm. The catalysed reaction is carnitine + NAD(+) = 3-dehydrocarnitine + NADH + H(+). Its pathway is amine and polyamine metabolism; carnitine metabolism. Its function is as follows. Catalyzes the NAD(+)-dependent oxidation of L-carnitine to 3-dehydrocarnitine. In Staphylococcus epidermidis (strain ATCC 12228 / FDA PCI 1200), this protein is L-carnitine dehydrogenase.